Consider the following 349-residue polypeptide: tRNA N6-adenosine threonylcarbamoyltransferase (349 aa).

Fe cation is bound by residues histidine 111 and histidine 115. Substrate is bound by residues 134-138 (LVSGG), aspartate 167, glycine 180, aspartate 184, and asparagine 279. Aspartate 307 lines the Fe cation pocket.

The protein belongs to the KAE1 / TsaD family. Fe(2+) serves as cofactor.

It localises to the cytoplasm. The catalysed reaction is L-threonylcarbamoyladenylate + adenosine(37) in tRNA = N(6)-L-threonylcarbamoyladenosine(37) in tRNA + AMP + H(+). Functionally, required for the formation of a threonylcarbamoyl group on adenosine at position 37 (t(6)A37) in tRNAs that read codons beginning with adenine. Is involved in the transfer of the threonylcarbamoyl moiety of threonylcarbamoyl-AMP (TC-AMP) to the N6 group of A37, together with TsaE and TsaB. TsaD likely plays a direct catalytic role in this reaction. This chain is tRNA N6-adenosine threonylcarbamoyltransferase, found in Nostoc punctiforme (strain ATCC 29133 / PCC 73102).